The primary structure comprises 165 residues: 2S seed storage protein 5 (165 aa).

The N-terminal stretch at 1 to 20 (MAKLILVFATLALFILLANA) is a signal peptide. 2 propeptides span residues 21–37 (SIYR…DVSN) and 71–89 (YEAD…DDEN).

It belongs to the 2S seed storage albumins family. As to quaternary structure, the mature protein consists of a small and a large chain linked by disulfide bonds.

Functionally, this is a 2S seed storage protein. This Arabidopsis thaliana (Mouse-ear cress) protein is 2S seed storage protein 5 (SESA5).